A 300-amino-acid polypeptide reads, in one-letter code: Transcription factor Sox-3 (300 aa).

The tract at residues 1-35 (MYNMMETEIKSPIPQSNTGSVTGGKNNSANDQDRV) is disordered. Residues 13-30 (IPQSNTGSVTGGKNNSAN) are compositionally biased toward polar residues. The segment at residues 35–103 (VKRPMNAFMV…MHMKEHPDYK (69 aa)) is a DNA-binding region (HMG box). Residue Ser-235 is modified to Phosphoserine. Positions 251–262 (DLRDMISMYLPP) match the 9aaTAD motif.

The protein resides in the nucleus. Its function is as follows. Transcriptional activator. This Danio rerio (Zebrafish) protein is Transcription factor Sox-3.